Consider the following 255-residue polypeptide: CDP-diacylglycerol pyrophosphatase (255 aa).

The chain crosses the membrane as a helical span at residues 5–27 (LLITVALIAVLALTTLVAWRYLF).

Belongs to the Cdh family.

The protein localises to the cell inner membrane. It catalyses the reaction a CDP-1,2-diacyl-sn-glycerol + H2O = a 1,2-diacyl-sn-glycero-3-phosphate + CMP + 2 H(+). It functions in the pathway phospholipid metabolism; CDP-diacylglycerol degradation; phosphatidate from CDP-diacylglycerol: step 1/1. The sequence is that of CDP-diacylglycerol pyrophosphatase from Cronobacter sakazakii (strain ATCC BAA-894) (Enterobacter sakazakii).